The sequence spans 261 residues: High-affinity zinc uptake system membrane protein ZnuB (261 aa).

Helical transmembrane passes span Phe5 to Ile27, Phe48 to Leu70, Ile85 to Phe107, Ile128 to Leu150, Ile172 to Ile194, Ala215 to Val234, and Leu238 to Leu257.

The protein belongs to the ABC-3 integral membrane protein family.

It localises to the cell membrane. Functionally, involved in the high-affinity zinc uptake transport system. This is High-affinity zinc uptake system membrane protein ZnuB (znuB) from Buchnera aphidicola subsp. Baizongia pistaciae (strain Bp).